A 297-amino-acid polypeptide reads, in one-letter code: Taste receptor type 2 member 4 (297 aa).

The Extracellular segment spans residues 1 to 11 (MLWELYVFVFA). The chain crosses the membrane as a helical span at residues 12-32 (ASVFLNFVGIIANLFIIVIII). At 33 to 46 (KTWVNSRRIASPDR) the chain is on the cytoplasmic side. The helical transmembrane segment at 47–67 (ILFSLAITRFLTLGLFLLNSV) threads the bilayer. The Extracellular segment spans residues 68–80 (YIATNTGRSVYFS). A helical transmembrane segment spans residues 81–101 (TFFLLCWKFLDANSLWLVTIL). Residues 102–128 (NSLYCVKITNFQHPVFLLLKRTISMKT) lie on the Cytoplasmic side of the membrane. Residues 129-149 (TSLLLACLLISALTTLLYYML) form a helical membrane-spanning segment. Over 150–171 (SQISRFPEHIIGRNDTSFDLSD) the chain is Extracellular. N-linked (GlcNAc...) asparagine glycosylation occurs at Asn-163. A helical transmembrane segment spans residues 172–192 (GILTLVASLVLNSLLQFMLNV). Topologically, residues 193–229 (TFASLLIHSLRRHIQKMQRNRTSFWNPQTEAHMGAMR) are cytoplasmic. Residues 230–250 (LMICFLVLYIPYSIATLLYLP) form a helical membrane-spanning segment. Residues 251–260 (SYMRKNLRAQ) are Extracellular-facing. The helical transmembrane segment at 261–281 (AICMIITAAYPPGHSVLLIIT) threads the bilayer. Residues 282–297 (HHKLKAKAKKIFCFYK) lie on the Cytoplasmic side of the membrane.

Belongs to the G-protein coupled receptor T2R family. Expressed in subsets of taste receptor cells of the tongue and palate epithelium and exclusively in gustducin-positive cells. Expressed in 15% taste bud cells in circumvallate and foliate papillae but only in 2% in fungiform papillae.

It localises to the membrane. It is found in the cell projection. The protein localises to the cilium membrane. Its function is as follows. Gustducin-coupled receptor for denatonium and N(6)-propyl-2-thiouracil implicated in the perception of bitter compounds in the oral cavity and the gastrointestinal tract. Signals through PLCB2 and the calcium-regulated cation channel TRPM5. In airway epithelial cells, binding of denatonium increases the intracellular calcium ion concentration and stimulates ciliary beat frequency. This Mus musculus (Mouse) protein is Taste receptor type 2 member 4 (Tas2r4).